The primary structure comprises 447 residues: Protein cereblon (447 aa).

Acidic residues-rich tracts occupy residues 1-10 (MADDEGEEDP) and 25-34 (ESEEEDEMEL). The segment at 1–47 (MADDEGEEDPGINNMGNLLQVISSESEEEDEMELEDAKTADSESPNI) is disordered. One can recognise a Lon N-terminal domain in the interval 82–322 (IPVLPHVQVM…CELDIMSKCT (241 aa)). One can recognise a CULT domain in the interval 321-429 (CTSLCCKHCP…LTRSALQPRI (109 aa)). 2 residues coordinate Zn(2+): Cys-326 and Cys-329. Residues Trp-383 and Trp-389 each coordinate (S)-thalidomide. Residues Cys-394 and Cys-397 each contribute to the Zn(2+) site.

This sequence belongs to the CRBN family. In terms of assembly, component of a DCX (DDB1-CUL4-X-box) protein ligase complex.

It localises to the cytoplasm. It is found in the nucleus. It functions in the pathway protein modification; protein ubiquitination. Functionally, substrate recognition component of a DCX (DDB1-CUL4-X-box) E3 protein ligase complex that mediates the ubiquitination and subsequent proteasomal degradation of target proteins, such as MEIS2. Normal degradation of key regulatory proteins is required for normal limb outgrowth and expression of the fibroblast growth factor FGF8. Maintains presynaptic glutamate release and consequently cognitive functions, such as memory and learning, by negatively regulating large-conductance calcium-activated potassium (BK) channels in excitatory neurons. Likely to function by regulating the assembly and neuronal surface expression of BK channels via its interaction with KCNT1. May also be involved in regulating anxiety-like behaviors via a BK channel-independent mechanism. The sequence is that of Protein cereblon (crbn) from Xenopus tropicalis (Western clawed frog).